The primary structure comprises 1710 residues: Latrophilin Cirl (1710 aa).

The Extracellular segment spans residues 1 to 767 (MLPTILSISY…LFTMFDGNMR (767 aa)). The region spanning 25–114 (ACEGKKLTIE…KYLEAHYQCI (90 aa)) is the SUEL-type lectin domain. Asn-142 is a glycosylation site (N-linked (GlcNAc...) asparagine). Residues 183–304 (QHTAVTHSTP…SGSVVPGNGS (122 aa)) are disordered. Composition is skewed to polar residues over residues 185–198 (TAVTHSTPSSSTTA) and 256–265 (NATSPSNTRI). A glycan (N-linked (GlcNAc...) asparagine) is linked at Asn-256. Low complexity-rich tracts occupy residues 275–285 (DDGTLLTTKSS) and 295–304 (SGSVVPGNGS). N-linked (GlcNAc...) asparagine glycosylation is found at Asn-302 and Asn-341. The disordered stretch occupies residues 376-400 (YDEYDDDPSSTTPATSSADCLHNSS). Residues 384–394 (SSTTPATSSAD) are compositionally biased toward low complexity. Asn-398, Asn-655, Asn-703, and Asn-730 each carry an N-linked (GlcNAc...) asparagine glycan. A GAIN-B domain is found at 561–754 (RSVVQKVKNI…AILMDVVDEH (194 aa)). 2 cysteine pairs are disulfide-bonded: Cys-709–Cys-736 and Cys-724–Cys-738. Positions 709–754 (CVFWNYIDHAWSANGCSLESTNRTHSVCSCNHLTNFAILMDVVDEH) are GPS. A helical transmembrane segment spans residues 768 to 788 (IFIYISIGICVVFIVIALLTL). The Cytoplasmic segment spans residues 789-801 (KLFNGVFVKSART). Residues 802 to 822 (SIYTSIYLCLLAIELLFLLGI) traverse the membrane as a helical segment. Over 823-828 (EQTETS) the chain is Extracellular. Residues 829-849 (IFCGFITIFLHCAILSGTAWF) form a helical membrane-spanning segment. Over 850–875 (CYEAFHSYSTLTSDELLLEVDQTPKV) the chain is Cytoplasmic. A helical membrane pass occupies residues 876–896 (NCYYLLSYGLSLSVVAISLVI). Residues 897–920 (DPSTYTQNDYCVLMEANALFYATF) lie on the Extracellular side of the membrane. The helical transmembrane segment at 921–941 (VMPVLVFFVAAIGYTFLSWII) threads the bilayer. The Cytoplasmic segment spans residues 942–968 (MCRKSRTGLKTKEHTRLASVRFDIRCS). A helical membrane pass occupies residues 969–989 (FVFLLLLSAVWCSAYFYLRGA). Residues 990–999 (KMDDDTADVY) are Extracellular-facing. A helical membrane pass occupies residues 1000 to 1020 (GYCFICFNTLLGLYIFVFHCI). The Cytoplasmic segment spans residues 1021-1710 (QNEKIRREYR…VRCYLEPLAK (690 aa)). Phosphoserine is present on residues Ser-1156, Ser-1253, Ser-1260, Ser-1329, and Ser-1330. Positions 1234 to 1259 (KPNSGQHGKKKRGAGGVPASPSGSLH) are disordered. Disordered regions lie at residues 1452–1540 (GGGS…SDER) and 1568–1690 (DYGA…QQRH). Residues 1458 to 1483 (GGSVSSRSQQQQLKKQQQQQSLAQQR) are compositionally biased toward low complexity. 2 stretches are compositionally biased toward acidic residues: residues 1491 to 1505 (DDDDDEDEEEDEEAT) and 1515 to 1528 (CDEDEEEDESDLED). The segment covering 1638–1650 (QTPAQKRQQLQKL) has biased composition (polar residues). The span at 1651 to 1672 (SPQSTTSSSSHTSHSNPNPHPH) shows a compositional bias: low complexity. A compositionally biased stretch (basic residues) spans 1673 to 1689 (QLTHPHPHQHPPHHQQR).

It belongs to the G-protein coupled receptor 2 family. LN-TM7 subfamily. In terms of assembly, forms a heterodimer, consisting of a large extracellular region non-covalently linked to a seven-transmembrane moiety. Proteolytically cleaved into 2 subunits, an extracellular subunit and a seven-transmembrane subunit.

It is found in the cell membrane. The sequence is that of Latrophilin Cirl from Drosophila erecta (Fruit fly).